Reading from the N-terminus, the 152-residue chain is Transcriptional repressor NrdR (152 aa).

A zinc finger lies at 3–34 (CPSCQHNGTRVLDSRPVDDGKSIRRRRECESC). Positions 49–139 (LIVVKKEGVR…VYRQFKDINV (91 aa)) constitute an ATP-cone domain.

Belongs to the NrdR family. Requires Zn(2+) as cofactor.

Functionally, negatively regulates transcription of bacterial ribonucleotide reductase nrd genes and operons by binding to NrdR-boxes. This Bacillus subtilis (strain 168) protein is Transcriptional repressor NrdR.